A 91-amino-acid polypeptide reads, in one-letter code: ATP synthase subunit c 2 (91 aa).

The next 2 helical transmembrane spans lie at 4–24 and 53–73; these read FSMC…GTGI and IGLA…LIIL.

The protein belongs to the ATPase C chain family. F-type ATPases have 2 components, F(1) - the catalytic core - and F(0) - the membrane proton channel. F(1) has five subunits: alpha(3), beta(3), gamma(1), delta(1), epsilon(1). F(0) has three main subunits: a(1), b(2) and c(10-14). The alpha and beta chains form an alternating ring which encloses part of the gamma chain. F(1) is attached to F(0) by a central stalk formed by the gamma and epsilon chains, while a peripheral stalk is formed by the delta and b chains.

It localises to the cell inner membrane. Functionally, f(1)F(0) ATP synthase produces ATP from ADP in the presence of a proton or sodium gradient. F-type ATPases consist of two structural domains, F(1) containing the extramembraneous catalytic core and F(0) containing the membrane proton channel, linked together by a central stalk and a peripheral stalk. During catalysis, ATP synthesis in the catalytic domain of F(1) is coupled via a rotary mechanism of the central stalk subunits to proton translocation. In terms of biological role, key component of the F(0) channel; it plays a direct role in translocation across the membrane. A homomeric c-ring of between 10-14 subunits forms the central stalk rotor element with the F(1) delta and epsilon subunits. This Pelobacter propionicus (strain DSM 2379 / NBRC 103807 / OttBd1) protein is ATP synthase subunit c 2.